We begin with the raw amino-acid sequence, 227 residues long: ATP phosphoribosyltransferase (227 aa).

It belongs to the ATP phosphoribosyltransferase family. Short subfamily. As to quaternary structure, heteromultimer composed of HisG and HisZ subunits.

The protein localises to the cytoplasm. The catalysed reaction is 1-(5-phospho-beta-D-ribosyl)-ATP + diphosphate = 5-phospho-alpha-D-ribose 1-diphosphate + ATP. The protein operates within amino-acid biosynthesis; L-histidine biosynthesis; L-histidine from 5-phospho-alpha-D-ribose 1-diphosphate: step 1/9. Catalyzes the condensation of ATP and 5-phosphoribose 1-diphosphate to form N'-(5'-phosphoribosyl)-ATP (PR-ATP). Has a crucial role in the pathway because the rate of histidine biosynthesis seems to be controlled primarily by regulation of HisG enzymatic activity. This Nitrosospira multiformis (strain ATCC 25196 / NCIMB 11849 / C 71) protein is ATP phosphoribosyltransferase.